Reading from the N-terminus, the 165-residue chain is Cyclic pyranopterin monophosphate synthase (165 aa).

Residues 79 to 81 (LCH) and 117 to 118 (ME) contribute to the substrate site. The active site involves D132.

It belongs to the MoaC family. In terms of assembly, homohexamer; trimer of dimers.

The catalysed reaction is (8S)-3',8-cyclo-7,8-dihydroguanosine 5'-triphosphate = cyclic pyranopterin phosphate + diphosphate. The protein operates within cofactor biosynthesis; molybdopterin biosynthesis. Catalyzes the conversion of (8S)-3',8-cyclo-7,8-dihydroguanosine 5'-triphosphate to cyclic pyranopterin monophosphate (cPMP). This Chloroflexus aggregans (strain MD-66 / DSM 9485) protein is Cyclic pyranopterin monophosphate synthase.